A 264-amino-acid polypeptide reads, in one-letter code: Transcription initiation factor TFIID subunit 9 (264 aa).

N6-acetyllysine is present on K5. Residues S149, S152, S155, and S158 each carry the phosphoserine modification. The interval V150–T174 is disordered. Over residues G151 to T174 the composition is skewed to polar residues. Phosphothreonine occurs at positions 159, 161, 164, and 178. Phosphoserine occurs at positions 181 and 196. A disordered region spans residues Q233–L264. Positions E249–L264 are enriched in acidic residues.

This sequence belongs to the TAF9 family. In terms of assembly, component of the TFIID basal transcription factor complex, composed of TATA-box-binding protein TBP, and a number of TBP-associated factors (TAFs), including TAF1, TAF2, TAF3, TAF4, TAF5, TAF6, TAF7, TAF8, TAF9, TAF10, TAF11, TAF12 and TAF13. Component of the TATA-binding protein-free TAF complex (TFTC), the PCAF histone acetylase complex and the STAGA transcription coactivator-HAT complex. The PCAF complex consists at least of TADA2L/ADA2, SUPT3H/SPT3, TADA3L/ADA3, TAF5L/PAF65-beta, TAF6L/PAF65-alpha, TAF10/TAFII30, TAF12/TAFII20, TAF9/TAFII31 and TRRAP. The STAGA transcription coactivator-HAT complex consists at least of SUPT3H, GCN5L2, SUPT7L, TAF5L, TAF6L, TADA3L, TAD1L, TAF10, TAF12, TRRAP and TAF9. Binds N-terminal domain of p53/TP53 which is essential for transcription. Component of some MLL1/MLL complex, at least composed of the core components KMT2A/MLL1, ASH2L, HCFC1/HCF1, WDR5 and RBBP5, as well as the facultative components BACC1, CHD8, E2F6, HSP70, INO80C, KANSL1, LAS1L, MAX, MCRS1, MGA, MYST1/MOF, PELP1, PHF20, PRP31, RING2, RUVB1/TIP49A, RUVB2/TIP49B, SENP3, TAF1, TAF4, TAF6, TAF7, TAF9 and TEX10. Binds TFIIB and the Herpes simplex virus activator VP16. Forms a heterodimer with TAF6 in a complex with the TAF4B-TAF12 heterodimer. Also interacts with TAF5. Binds directly DNA. Increased DNA binding when complexed with TAF6.

It is found in the nucleus. Its function is as follows. The TFIID basal transcription factor complex plays a major role in the initiation of RNA polymerase II (Pol II)-dependent transcription. TFIID recognizes and binds promoters with or without a TATA box via its subunit TBP, a TATA-box-binding protein, and promotes assembly of the pre-initiation complex (PIC). The TFIID complex consists of TBP and TBP-associated factors (TAFs), including TAF1, TAF2, TAF3, TAF4, TAF5, TAF6, TAF7, TAF8, TAF9, TAF10, TAF11, TAF12 and TAF13. TAF9 is also a component of the TBP-free TAFII complex (TFTC), the PCAF histone acetylase complex and the STAGA transcription coactivator-HAT complex. TAF9 and its paralog TAF9B are involved in transcriptional activation as well as repression of distinct but overlapping sets of genes. Essential for cell viability. May have a role in gene regulation associated with apoptosis. The sequence is that of Transcription initiation factor TFIID subunit 9 from Rattus norvegicus (Rat).